The following is a 420-amino-acid chain: Protein disulfide isomerase Creld1 (420 aa).

Residues 1–29 form the signal peptide; it reads MAPQPLRGLVPFLLWCLSLFLSLPGPVWL. The Extracellular segment spans residues 30 to 362; sequence QPSPPPHSAP…GFFAEMTEDE (333 aa). A CXXC motif is present at residues 46–49; that stretch reads CHTC. 4 cysteine pairs are disulfide-bonded: C46-C49, C155-C169, C163-C181, and C183-C192. Residues 153 to 193 enclose the EGF-like 1 domain; sequence LPCPGGTERPCGGYGQCEGEGTRGGSGHCDCQAGYGGEACG. The N-linked (GlcNAc...) asparagine glycan is linked to N205. FU repeat units lie at residues 208–255 and 268–315; these read HLVC…EQAT and SYEC…VVCP. Residues 278–281 carry the CXXC motif; it reads CLGC. 4 cysteine pairs are disulfide-bonded: C278–C281, C309–C321, C314–C330, and C332–C343. The EGF-like 2; calcium-binding domain maps to 305–342; that stretch reads DVDECETVVCPGENEQCENTEGSYRCVCAEGFRQEDGI. A helical transmembrane segment spans residues 363–383; that stretch reads MVVLQQMFFGVIICALATLAA. K384 is a topological domain (cytoplasmic). The chain crosses the membrane as a helical span at residues 385–405; that stretch reads GDLVFTAIFIGAVAAMTGYWL. The Extracellular segment spans residues 406-420; that stretch reads SERSDRVLEGFIKGR.

It belongs to the CRELD family.

It localises to the membrane. It catalyses the reaction Catalyzes the rearrangement of -S-S- bonds in proteins.. Functionally, protein disulfide isomerase. Promotes the localization of acetylcholine receptors (AChRs) to the plasma membrane. In Rattus norvegicus (Rat), this protein is Protein disulfide isomerase Creld1 (Creld1).